The sequence spans 60 residues: Large ribosomal subunit protein bL32 (60 aa).

Residues 1–60 (MAVQQNKKSPSKRGMHRSHNALTVPGIAVEPTTGETHLRHHISPNGFYRGRQVLKNKSEA) form a disordered region. Residues 9-19 (SPSKRGMHRSH) are compositionally biased toward basic residues.

It belongs to the bacterial ribosomal protein bL32 family.

In Paracidovorax citrulli (strain AAC00-1) (Acidovorax citrulli), this protein is Large ribosomal subunit protein bL32.